The chain runs to 214 residues: MSSESTKNRHRSSKRTPSPLQKERKRNWENRKSRSRSPIRRHGEKNLEYAHHNNQDNRQSSYTASKTSDQAMKTKEKTSGGTRTNPYTVFSQHRANHSNAPGWCGFYWHSTRLARNGTNNIFNEMKQKFQELQIDGKISWDTTRELLFTQKKTLDQGYRNMLYHFRHSPDCPRCDYWDDVYRKHLANVSSQESEEVTDEEMLSAVESMETNASN.

2 disordered regions span residues 1-85 and 192-214; these read MSSE…TRTN and ESEE…NASN. Positions 33–43 are enriched in basic residues; the sequence is SRSRSPIRRHG. The span at 44–55 shows a compositional bias: basic and acidic residues; that stretch reads EKNLEYAHHNNQ. Positions 56–71 are enriched in polar residues; it reads DNRQSSYTASKTSDQA. Over residues 192–201 the composition is skewed to acidic residues; the sequence is ESEEVTDEEM.

Belongs to the Bocaparvovirus Non-structural protein NP-1 family.

The protein resides in the host nucleus. Its function is as follows. Required for the expression of the capsid proteins. Performs the splicing and internal polyadenylation of the viral capsid-encoding mRNA precursor, which allows its maturation and expression. Transactivates the viral promoter. The protein is Non-structural protein NP-1 (NP1) of Human bocavirus 4 (HBoV4).